We begin with the raw amino-acid sequence, 328 residues long: Tetraacyldisaccharide 4'-kinase (328 aa).

An ATP-binding site is contributed by 55-62 (TAGGNGKT).

It belongs to the LpxK family.

The catalysed reaction is lipid A disaccharide (E. coli) + ATP = lipid IVA (E. coli) + ADP + H(+). It functions in the pathway glycolipid biosynthesis; lipid IV(A) biosynthesis; lipid IV(A) from (3R)-3-hydroxytetradecanoyl-[acyl-carrier-protein] and UDP-N-acetyl-alpha-D-glucosamine: step 6/6. Its function is as follows. Transfers the gamma-phosphate of ATP to the 4'-position of a tetraacyldisaccharide 1-phosphate intermediate (termed DS-1-P) to form tetraacyldisaccharide 1,4'-bis-phosphate (lipid IVA). The chain is Tetraacyldisaccharide 4'-kinase (lpxK) from Escherichia coli (strain K12).